Here is a 142-residue protein sequence, read N- to C-terminus: Large ribosomal subunit protein uL13 (142 aa).

This sequence belongs to the universal ribosomal protein uL13 family. In terms of assembly, part of the 50S ribosomal subunit.

Functionally, this protein is one of the early assembly proteins of the 50S ribosomal subunit, although it is not seen to bind rRNA by itself. It is important during the early stages of 50S assembly. This Ralstonia pickettii (strain 12J) protein is Large ribosomal subunit protein uL13.